We begin with the raw amino-acid sequence, 333 residues long: Autoinducer 2 import system permease protein LsrC (333 aa).

Transmembrane regions (helical) follow at residues leucine 14–leucine 34, leucine 39–leucine 59, isoleucine 70–valine 90, leucine 93–leucine 113, isoleucine 115–leucine 135, leucine 157–leucine 177, isoleucine 206–alanine 226, glycine 252–leucine 272, and leucine 284–aspartate 304.

Belongs to the binding-protein-dependent transport system permease family. AraH/RbsC subfamily. As to quaternary structure, the complex is composed of two ATP-binding proteins (LsrA), two transmembrane proteins (LsrC and LsrD) and a solute-binding protein (LsrB).

It is found in the cell inner membrane. Its function is as follows. Part of the ABC transporter complex LsrABCD involved in autoinducer 2 (AI-2) import. Probably responsible for the translocation of the substrate across the membrane. The protein is Autoinducer 2 import system permease protein LsrC (lsrC) of Photorhabdus laumondii subsp. laumondii (strain DSM 15139 / CIP 105565 / TT01) (Photorhabdus luminescens subsp. laumondii).